Consider the following 209-residue polypeptide: Bcl-2 homologous antagonist/killer (209 aa).

A disordered region spans residues 1–28 (MASGQGPGPPKVGCDESPSPSEQQVAQD). Ala2 bears the N-acetylalanine mark. A compositionally biased stretch (polar residues) spans 18–27 (PSPSEQQVAQ). The BH3 signature appears at 72–86 (VGRQLALIGDDINRR). The short motif at 115–134 (SLFKSGISWGRVVALLGFGY) is the BH1 element. The Zn(2+) site is built by Asp158 and His162. The BH2 motif lies at 167–182 (RWIAQRGGWVAALNFR). A helical membrane pass occupies residues 186–203 (ILTVMVIFGVVLLGQFVV).

Belongs to the Bcl-2 family. Homodimer. Formation of the homodimer is zinc-dependent. Forms heterodimers with BCL2 and BCL2L1 isoform Bcl-X(L). Forms heterooligomers with BAX. Interacts with BCL2A1. Interacts withRTL10/BOP. Interacts with VDAC1. Interacts with GIMAP3/IAN4 and GIMAP5/IAN5. In terms of assembly, (Microbial infection) Interacts with gamma-herpesvirus 68 protein vBCL2. In terms of tissue distribution, widely expressed.

The protein localises to the mitochondrion outer membrane. Its function is as follows. In the presence of an appropriate stimulus, accelerates programmed cell death by binding to, and antagonizing the anti-apoptotic action of BCL2. This Mus musculus (Mouse) protein is Bcl-2 homologous antagonist/killer (Bak1).